The sequence spans 36 residues: Photosystem I reaction center subunit VIII (36 aa).

The helical transmembrane segment at 9–29 (ILVPLVGLVFPAIAMASLFLY) threads the bilayer.

The protein belongs to the PsaI family.

It is found in the plastid. Its subcellular location is the chloroplast thylakoid membrane. Its function is as follows. May help in the organization of the PsaL subunit. The chain is Photosystem I reaction center subunit VIII from Oltmannsiellopsis viridis (Marine flagellate).